A 360-amino-acid chain; its full sequence is Phospho-N-acetylmuramoyl-pentapeptide-transferase (360 aa).

The next 10 membrane-spanning stretches (helical) occupy residues 24 to 44 (RAVM…PWTI), 69 to 89 (GTPT…TLLW), 92 to 112 (WANP…ALGF), 133 to 153 (MVWQ…LAAN), 158 to 178 (ILIV…GFLV), 199 to 219 (GLAA…AYVS), 239 to 259 (VAIF…FNAY), 263 to 283 (VFMG…VAVI), 288 to 308 (FVLV…MLQV), and 337 to 357 (QVVV…LSTL).

This sequence belongs to the glycosyltransferase 4 family. MraY subfamily. Mg(2+) is required as a cofactor.

Its subcellular location is the cell inner membrane. The catalysed reaction is UDP-N-acetyl-alpha-D-muramoyl-L-alanyl-gamma-D-glutamyl-meso-2,6-diaminopimeloyl-D-alanyl-D-alanine + di-trans,octa-cis-undecaprenyl phosphate = di-trans,octa-cis-undecaprenyl diphospho-N-acetyl-alpha-D-muramoyl-L-alanyl-D-glutamyl-meso-2,6-diaminopimeloyl-D-alanyl-D-alanine + UMP. It functions in the pathway cell wall biogenesis; peptidoglycan biosynthesis. In terms of biological role, catalyzes the initial step of the lipid cycle reactions in the biosynthesis of the cell wall peptidoglycan: transfers peptidoglycan precursor phospho-MurNAc-pentapeptide from UDP-MurNAc-pentapeptide onto the lipid carrier undecaprenyl phosphate, yielding undecaprenyl-pyrophosphoryl-MurNAc-pentapeptide, known as lipid I. In Neisseria gonorrhoeae (strain ATCC 700825 / FA 1090), this protein is Phospho-N-acetylmuramoyl-pentapeptide-transferase.